Consider the following 453-residue polypeptide: tRNA hydroxylation protein P (453 aa).

The protein belongs to the peptidase U32 family.

Involved in prephenate-dependent formation of 5-hydroxyuridine (ho5U) modification at position 34 in tRNAs, the first step in 5-carboxymethoxyuridine (cmo5U) biosynthesis. Involved differently in ho5U formation in each tRNA; tRNA(Leu3) and tRNA(Pro3) are major targets of TrhP. The sequence is that of tRNA hydroxylation protein P from Escherichia coli (strain K12).